A 407-amino-acid chain; its full sequence is Putative cell wall shaping protein YabE (407 aa).

The signal sequence occupies residues 1–31; the sequence is MKKLFSVKLSKSKVILVAACLLLAGSGTAYA. A G5 domain is found at 206-286; the sequence is ITRIEKVTDV…DKVIAVGTKQ (81 aa).

Its function is as follows. Suggested to be involved in cell wall modification. The protein is Putative cell wall shaping protein YabE (yabE) of Bacillus subtilis (strain 168).